The sequence spans 87 residues: U3-theraphotoxin-Hhn1a 12 (87 aa).

An N-terminal signal peptide occupies residues 1 to 24 (MVNMKASMFLTFAGLVLLFVVCYA). The propeptide occupies 25-52 (SESEEKEFPKEMLSSIFAVDKDFKQEER). Intrachain disulfides connect Cys54–Cys67, Cys61–Cys72, and Cys66–Cys79.

This sequence belongs to the neurotoxin 10 (Hwtx-1) family. 51 (Hntx-8) subfamily. Hntx-8 sub-subfamily. As to expression, expressed by the venom gland.

It is found in the secreted. In terms of biological role, ion channel inhibitor. The polypeptide is U3-theraphotoxin-Hhn1a 12 (Cyriopagopus hainanus (Chinese bird spider)).